We begin with the raw amino-acid sequence, 109 residues long: Large ribosomal subunit protein uL22 (109 aa).

Belongs to the universal ribosomal protein uL22 family. As to quaternary structure, part of the 50S ribosomal subunit.

Functionally, this protein binds specifically to 23S rRNA; its binding is stimulated by other ribosomal proteins, e.g. L4, L17, and L20. It is important during the early stages of 50S assembly. It makes multiple contacts with different domains of the 23S rRNA in the assembled 50S subunit and ribosome. The globular domain of the protein is located near the polypeptide exit tunnel on the outside of the subunit, while an extended beta-hairpin is found that lines the wall of the exit tunnel in the center of the 70S ribosome. The protein is Large ribosomal subunit protein uL22 of Psychrobacter cryohalolentis (strain ATCC BAA-1226 / DSM 17306 / VKM B-2378 / K5).